Here is a 208-residue protein sequence, read N- to C-terminus: MGSCSGRCALVVLCAFQLVAALERQVFDFLGYQWAPILANFVHIIIVILGLFGTIQYRLRYVMVYTLWAAVWVTWNVFIICFYLEVGGLLKDSELLTFSLSRHRSWWRERWPGCLHEEVPAVGLGAPHGQALVSGAGCALEPSYVEALHSCLQILIALLGFVCGCQVVSVFTEEEDSFDFIGGFDPFPLYHVNEKPSSLLSKQVYLPA.

A run of 3 helical transmembrane segments spans residues 35–55, 62–82, and 151–171; these read APILANFVHIIIVILGLFGTI, VMVYTLWAAVWVTWNVFIICF, and CLQILIALLGFVCGCQVVSVF.

Belongs to the NKAIN family. In terms of assembly, interacts with ATP1B1.

The protein resides in the cell membrane. This Homo sapiens (Human) protein is Sodium/potassium-transporting ATPase subunit beta-1-interacting protein 4 (NKAIN4).